The following is a 214-amino-acid chain: Orotate phosphoribosyltransferase (214 aa).

Lysine 26 contacts 5-phospho-alpha-D-ribose 1-diphosphate. 34-35 contacts orotate; that stretch reads FF. 5-phospho-alpha-D-ribose 1-diphosphate contacts are provided by residues 72–73, arginine 99, lysine 100, lysine 103, histidine 105, and 124–132; these read YK and DDVITAGTA. The orotate site is built by threonine 128 and arginine 156.

Belongs to the purine/pyrimidine phosphoribosyltransferase family. PyrE subfamily. As to quaternary structure, homodimer. Mg(2+) serves as cofactor.

The enzyme catalyses orotidine 5'-phosphate + diphosphate = orotate + 5-phospho-alpha-D-ribose 1-diphosphate. It functions in the pathway pyrimidine metabolism; UMP biosynthesis via de novo pathway; UMP from orotate: step 1/2. In terms of biological role, catalyzes the transfer of a ribosyl phosphate group from 5-phosphoribose 1-diphosphate to orotate, leading to the formation of orotidine monophosphate (OMP). This is Orotate phosphoribosyltransferase from Pasteurella multocida (strain Pm70).